The following is a 249-amino-acid chain: Adapter protein MecA (249 aa).

Belongs to the MecA family. In terms of assembly, homodimer.

Enables the recognition and targeting of unfolded and aggregated proteins to the ClpC protease or to other proteins involved in proteolysis. In Streptococcus thermophilus (strain CNRZ 1066), this protein is Adapter protein MecA.